The sequence spans 701 residues: Elongation factor G (701 aa).

Residues 8-290 form the tr-type G domain; the sequence is ARYRNIGISA…AVIEYLPAPT (283 aa). GTP contacts are provided by residues 17–24, 88–92, and 142–145; these read AHIDAGKT, DTPGH, and NKMD.

The protein belongs to the TRAFAC class translation factor GTPase superfamily. Classic translation factor GTPase family. EF-G/EF-2 subfamily.

It localises to the cytoplasm. In terms of biological role, catalyzes the GTP-dependent ribosomal translocation step during translation elongation. During this step, the ribosome changes from the pre-translocational (PRE) to the post-translocational (POST) state as the newly formed A-site-bound peptidyl-tRNA and P-site-bound deacylated tRNA move to the P and E sites, respectively. Catalyzes the coordinated movement of the two tRNA molecules, the mRNA and conformational changes in the ribosome. This is Elongation factor G from Sodalis glossinidius (strain morsitans).